Consider the following 449-residue polypeptide: Biotin carboxylase (449 aa).

The 445-residue stretch at 1–445 (MLDKIVIANR…NIHYLEKKLG (445 aa)) folds into the Biotin carboxylation domain. ATP-binding positions include Lys-116, Lys-159, 165–166 (GG), 201–204 (EKYL), His-209, and His-236. In terms of domain architecture, ATP-grasp spans 120–317 (IAAMKKAGVP…LIKEQLRIAA (198 aa)). Lys-238 provides a ligand contact to hydrogencarbonate. The ATP site is built by Glu-276 and Glu-288. Mg(2+)-binding residues include Glu-276, Glu-288, and Asn-290. Residues Glu-276, Glu-288, and Asn-290 each coordinate Mn(2+). Hydrogencarbonate contacts are provided by Arg-292, Val-295, and Arg-338. Residue Arg-292 is part of the active site. Arg-338 contacts biotin.

In terms of assembly, acetyl-CoA carboxylase is a heterohexamer of biotin carboxyl carrier protein, biotin carboxylase and the two subunits of carboxyl transferase in a 2:2 complex. Requires Mg(2+) as cofactor. Mn(2+) serves as cofactor.

It catalyses the reaction N(6)-biotinyl-L-lysyl-[protein] + hydrogencarbonate + ATP = N(6)-carboxybiotinyl-L-lysyl-[protein] + ADP + phosphate + H(+). It participates in lipid metabolism; malonyl-CoA biosynthesis; malonyl-CoA from acetyl-CoA: step 1/1. Functionally, this protein is a component of the acetyl coenzyme A carboxylase complex; first, biotin carboxylase catalyzes the carboxylation of the carrier protein and then the transcarboxylase transfers the carboxyl group to form malonyl-CoA. The polypeptide is Biotin carboxylase (accC) (Escherichia coli (strain K12)).